The sequence spans 201 residues: Probable calcium-binding protein CML15 (201 aa).

The disordered stretch occupies residues 1 to 55 (MGKVRAFFSRKGRGNSSGRSRSMREAAMNVDWSPRPSDLAAAAAAKPRPPAAEDE). EF-hand domains lie at 51 to 86 (AAED…VGHA), 87 to 122 (VTDD…PPGD), 125 to 160 (AAEE…IGEA), and 161 to 196 (ATVA…GAGF). Residues D64, N66, D68, R70, E75, D100, D102, D104, Y106, E111, D138, D140, N142, E149, D174, N176, D178, and E185 each coordinate Ca(2+).

In terms of biological role, potential calcium sensor. The sequence is that of Probable calcium-binding protein CML15 (CML15) from Oryza sativa subsp. japonica (Rice).